The primary structure comprises 184 residues: Large ribosomal subunit protein uL6 (184 aa).

This sequence belongs to the universal ribosomal protein uL6 family. As to quaternary structure, part of the 50S ribosomal subunit.

In terms of biological role, this protein binds to the 23S rRNA, and is important in its secondary structure. It is located near the subunit interface in the base of the L7/L12 stalk, and near the tRNA binding site of the peptidyltransferase center. In Thermotoga petrophila (strain ATCC BAA-488 / DSM 13995 / JCM 10881 / RKU-1), this protein is Large ribosomal subunit protein uL6.